The chain runs to 255 residues: MTMTTMPESLNSPVSGKAVFMEFGPPNQQMSPSPMSHGHYSMHCLHSAGHSQPDGAYSSASSFSRPLGYPYVNSVSSHASSPYISSVQSYPGSASLAQSRLEDPGADSEKSTVVEGGEVRFNGKGKKIRKPRTIYSSLQLQALNRRFQQTQYLALPERAELAASLGLTQTQVKIWFQNKRSKFKKLMKQGGAALEGSALANGRALSAGSPPVPPGWNPNSSSGKGSGSSAGSYVPSYTSWYPSAHQEAMQQPQLM.

Residues 1 to 14 (MTMTTMPESLNSPV) are compositionally biased toward polar residues. 2 disordered regions span residues 1-38 (MTMTTMPESLNSPVSGKAVFMEFGPPNQQMSPSPMSHG) and 95-118 (SLAQSRLEDPGADSEKSTVVEGGE). Residues 25–36 (PPNQQMSPSPMS) are compositionally biased toward low complexity. Positions 100-112 (RLEDPGADSEKST) are enriched in basic and acidic residues. The homeobox DNA-binding region spans 128 to 187 (IRKPRTIYSSLQLQALNRRFQQTQYLALPERAELAASLGLTQTQVKIWFQNKRSKFKKLM). Positions 204-233 (ALSAGSPPVPPGWNPNSSSGKGSGSSAGSY) are disordered. Over residues 217 to 232 (NPNSSSGKGSGSSAGS) the composition is skewed to low complexity.

Belongs to the distal-less homeobox family. In terms of assembly, interacts with SMAD4 (via homeobox DNA-binding domain). Interacts (via homeobox DNA-binding domain) with POU4F2; this interaction suppresses DLX1-mediated transcriptional activity in postnatal retina and enhances retinal ganglion cell (RGC) differentiation. As to expression, expressed in a restricted region of the developing brain, within the diencephalon and the adjacent telencephalic regions.

The protein resides in the nucleus. Functionally, plays a role as a transcriptional activator or repressor. Inhibits several cytokine signaling pathways, such as TGFB1, activin-A/INHBA and BMP4 by interfering with the transcriptional stimulatory activity of transcription factors, such as MSX2, FAST2, SMAD2 and SMAD3 during hematopoietic cell differentiation. Plays a role in terminal differentiation of interneurons, such as amacrine and bipolar cells in the developing retina. Likely to play a regulatory role in the development of the ventral forebrain. May play a role in craniofacial patterning and morphogenesis and may be involved in the early development of diencephalic subdivisions. The chain is Homeobox protein DLX-1 (Dlx1) from Mus musculus (Mouse).